Here is a 283-residue protein sequence, read N- to C-terminus: Energy-coupling factor transporter ATP-binding protein EcfA1 (283 aa).

One can recognise an ABC transporter domain in the interval 7–244 (VEFRHVSFTY…PELLQEIGLD (238 aa)). ATP is bound at residue 41 to 48 (GHNGSGKS).

This sequence belongs to the ABC transporter superfamily. Energy-coupling factor EcfA family. As to quaternary structure, forms a stable energy-coupling factor (ECF) transporter complex composed of 2 membrane-embedded substrate-binding proteins (S component), 2 ATP-binding proteins (A component) and 2 transmembrane proteins (T component).

Its subcellular location is the cell membrane. Functionally, ATP-binding (A) component of a common energy-coupling factor (ECF) ABC-transporter complex. Unlike classic ABC transporters this ECF transporter provides the energy necessary to transport a number of different substrates. This is Energy-coupling factor transporter ATP-binding protein EcfA1 from Lactobacillus acidophilus (strain ATCC 700396 / NCK56 / N2 / NCFM).